A 145-amino-acid polypeptide reads, in one-letter code: Antiholin-like protein LrgA (145 aa).

4 helical membrane-spanning segments follow: residues 13 to 30 (FFHQ…SKII), 40 to 62 (GSVI…LGEV), 69 to 91 (LTNN…LGVI), and 95 to 117 (PFLI…GYVT).

Belongs to the CidA/LrgA family. LrgA subfamily.

It localises to the cell membrane. Its function is as follows. Inhibits the expression or activity of extracellular murein hydrolases by interacting, possibly with LrgB, with the holin-like proteins CidA and/or CidB. The LrgAB and CidAB proteins may affect the proton motive force of the membrane. May be involved in programmed cell death (PCD), possibly triggering PCD in response to antibiotics and environmental stresses. This is Antiholin-like protein LrgA from Staphylococcus aureus (strain MW2).